Consider the following 512-residue polypeptide: Sodium-dependent phosphate transport protein 1, chloroplastic (512 aa).

A chloroplast-targeting transit peptide spans 1–59 (MNARALLCSSNIHSLYTSNRPPEKTSSSRSLRNLKPSPKSLRVWIYPRNRSSVFRVLVR). A run of 11 helical transmembrane segments spans residues 103–123 (WVIVLLCFSAFLLCNMDRVNM), 141–161 (VGLIQSSFFWGYLLTQIAGGI), 171–191 (VLGFGVIWWSIATILTPVAAK), 192–212 (LGLPYLLVVRAFMGVGEGVAM), 234–254 (LVYSGMYLGSVTGLAFSPFLI), 257–277 (FGWPSVFYSFGSLGTVWLTLW), 323–343 (VWALISCHFCHNWGTFILLTW), 361–381 (LLSVFPWMTMAISANAGGWIA), 401–421 (IGFLGPAFFLTQLKHIDSPTM), 453–473 (GVLLGLSNTAGVLAGVLGTAA), and 486–506 (VFTISVGLYLVGTVIWNLFST).

It belongs to the major facilitator superfamily. Sodium/anion cotransporter (TC 2.A.1.14) family. As to expression, expressed in flower buds, sepals of mature flowers and mature leaves, less in senescent leaves and at low levels in roots.

Its subcellular location is the plastid. It is found in the chloroplast thylakoid membrane. Its function is as follows. Specific for inorganic phosphate transport across the thylakoid membrane in a sodium dependent manner. Binds glutamate but cannot transport it. May act as an ascorbate transporter at the thylakoid membrane. This is Sodium-dependent phosphate transport protein 1, chloroplastic (ANTR1) from Arabidopsis thaliana (Mouse-ear cress).